A 686-amino-acid polypeptide reads, in one-letter code: DNA gyrase subunit B (686 aa).

Residues 1–27 (MADSGNPNENNPSTDTGVNDAVSTSHG) show a composition bias toward polar residues. Residues 1–29 (MADSGNPNENNPSTDTGVNDAVSTSHGDA) form a disordered region. In terms of domain architecture, Toprim spans 465–579 (CEIFIVEGDS…SGHVYLSRPP (115 aa)). E471, D544, and D546 together coordinate Mg(2+).

Belongs to the type II topoisomerase GyrB family. In terms of assembly, heterotetramer, composed of two GyrA and two GyrB chains. In the heterotetramer, GyrA contains the active site tyrosine that forms a transient covalent intermediate with DNA, while GyrB binds cofactors and catalyzes ATP hydrolysis. It depends on Mg(2+) as a cofactor. The cofactor is Mn(2+). Ca(2+) serves as cofactor.

The protein localises to the cytoplasm. It catalyses the reaction ATP-dependent breakage, passage and rejoining of double-stranded DNA.. A type II topoisomerase that negatively supercoils closed circular double-stranded (ds) DNA in an ATP-dependent manner to modulate DNA topology and maintain chromosomes in an underwound state. Negative supercoiling favors strand separation, and DNA replication, transcription, recombination and repair, all of which involve strand separation. Also able to catalyze the interconversion of other topological isomers of dsDNA rings, including catenanes and knotted rings. Type II topoisomerases break and join 2 DNA strands simultaneously in an ATP-dependent manner. The chain is DNA gyrase subunit B from Streptomyces coelicolor (strain ATCC BAA-471 / A3(2) / M145).